We begin with the raw amino-acid sequence, 361 residues long: Phosphoribosylformylglycinamidine cyclo-ligase (361 aa).

Belongs to the AIR synthase family.

It localises to the cytoplasm. The enzyme catalyses 2-formamido-N(1)-(5-O-phospho-beta-D-ribosyl)acetamidine + ATP = 5-amino-1-(5-phospho-beta-D-ribosyl)imidazole + ADP + phosphate + H(+). It participates in purine metabolism; IMP biosynthesis via de novo pathway; 5-amino-1-(5-phospho-D-ribosyl)imidazole from N(2)-formyl-N(1)-(5-phospho-D-ribosyl)glycinamide: step 2/2. This Bartonella henselae (strain ATCC 49882 / DSM 28221 / CCUG 30454 / Houston 1) (Rochalimaea henselae) protein is Phosphoribosylformylglycinamidine cyclo-ligase.